The following is a 131-amino-acid chain: Sec-independent protein translocase protein TatB (131 aa).

The helical transmembrane segment at 2–22 threads the bilayer; that stretch reads FDGIGFMELLLIGVLGLVVLG. Positions 69–131 are disordered; that stretch reads NQGLKNLAPE…ENAKSDKPNG (63 aa). The segment covering 105–123 has biased composition (low complexity); the sequence is AKETPAKETATTETTSTEN.

The protein belongs to the TatB family. In terms of assembly, the Tat system comprises two distinct complexes: a TatABC complex, containing multiple copies of TatA, TatB and TatC subunits, and a separate TatA complex, containing only TatA subunits. Substrates initially bind to the TatABC complex, which probably triggers association of the separate TatA complex to form the active translocon.

It is found in the cell inner membrane. In terms of biological role, part of the twin-arginine translocation (Tat) system that transports large folded proteins containing a characteristic twin-arginine motif in their signal peptide across membranes. Together with TatC, TatB is part of a receptor directly interacting with Tat signal peptides. TatB may form an oligomeric binding site that transiently accommodates folded Tat precursor proteins before their translocation. The sequence is that of Sec-independent protein translocase protein TatB from Shewanella piezotolerans (strain WP3 / JCM 13877).